The chain runs to 597 residues: Elongation factor 4 (597 aa).

Positions 2-184 (DHIRNFSIIA…ALIAKVPPPK (183 aa)) constitute a tr-type G domain. GTP contacts are provided by residues 14–19 (DHGKST) and 131–134 (NKID).

It belongs to the TRAFAC class translation factor GTPase superfamily. Classic translation factor GTPase family. LepA subfamily.

Its subcellular location is the cell inner membrane. It carries out the reaction GTP + H2O = GDP + phosphate + H(+). Required for accurate and efficient protein synthesis under certain stress conditions. May act as a fidelity factor of the translation reaction, by catalyzing a one-codon backward translocation of tRNAs on improperly translocated ribosomes. Back-translocation proceeds from a post-translocation (POST) complex to a pre-translocation (PRE) complex, thus giving elongation factor G a second chance to translocate the tRNAs correctly. Binds to ribosomes in a GTP-dependent manner. The sequence is that of Elongation factor 4 from Burkholderia multivorans (strain ATCC 17616 / 249).